The chain runs to 201 residues: Small ribosomal subunit protein uS4c (201 aa).

A disordered region spans residues 15–44 (LGALPGLTNKRPRAGSDLRNQSRSGKKSQY). Residues 89-149 (MRLDNILFRL…DEQNSRALIQ (61 aa)) enclose the S4 RNA-binding domain.

Belongs to the universal ribosomal protein uS4 family. Part of the 30S ribosomal subunit. Contacts protein S5. The interaction surface between S4 and S5 is involved in control of translational fidelity.

The protein resides in the plastid. The protein localises to the chloroplast. One of the primary rRNA binding proteins, it binds directly to 16S rRNA where it nucleates assembly of the body of the 30S subunit. In terms of biological role, with S5 and S12 plays an important role in translational accuracy. The protein is Small ribosomal subunit protein uS4c (rps4) of Daucus carota (Wild carrot).